The sequence spans 41 residues: Large ribosomal subunit protein bL36A (41 aa).

It belongs to the bacterial ribosomal protein bL36 family.

In Vibrio cholerae serotype O1 (strain ATCC 39541 / Classical Ogawa 395 / O395), this protein is Large ribosomal subunit protein bL36A.